Here is a 1252-residue protein sequence, read N- to C-terminus: Fanconi anemia group J protein homolog (1252 aa).

A Helicase ATP-binding domain is found at 11–452 (GGVKIMFPCK…KDHEQLRAMC (442 aa)). The Nuclear localization signal motif lies at 164–181 (RKRIRPLETEQQVRKRHC). 191–198 (ALEVYNQR) provides a ligand contact to ATP. 4 residues coordinate [4Fe-4S] cluster: Cys292, Cys308, Cys320, and Cys360. Positions 403–406 (DEAH) match the DEAH box motif. Disordered stretches follow at residues 919 to 1008 (SKEP…DRTN) and 1212 to 1252 (TNGE…STST). Polar residues-rich tracts occupy residues 920-930 (KEPSSASQQEA) and 952-969 (HLTTTINSINPGPSNQPG). Positions 989-1008 (MDSTPRRPANKTEKKSDRTN) are enriched in basic and acidic residues. Residues 1215–1224 (EEAEQVESQE) are compositionally biased toward acidic residues. Residues 1228–1239 (KKRKISLSRSRN) show a composition bias toward basic residues.

This sequence belongs to the DEAD box helicase family. DEAH subfamily. It depends on [4Fe-4S] cluster as a cofactor.

It is found in the nucleus. It carries out the reaction Couples ATP hydrolysis with the unwinding of duplex DNA at the replication fork by translocating in the 5'-3' direction. This creates two antiparallel DNA single strands (ssDNA). The leading ssDNA polymer is the template for DNA polymerase III holoenzyme which synthesizes a continuous strand.. The catalysed reaction is ATP + H2O = ADP + phosphate + H(+). Functionally, DNA-dependent helicase and 5' to 3' DNA helicase required for the maintenance of chromosomal stability. Involved in the repair of DNA double-strand breaks by homologous recombination. Involved in the repair of abasic sites at replication forks by promoting the degradation of DNA-protein cross-links: acts by catalyzing unfolding of HMCES DNA-protein cross-link via its helicase activity, exposing the underlying DNA and enabling cleavage of the DNA-protein adduct by the SPRTN metalloprotease. This chain is Fanconi anemia group J protein homolog (BRIP1), found in Gallus gallus (Chicken).